An 870-amino-acid chain; its full sequence is DNA mismatch repair protein MutS (870 aa).

617 to 624 is a binding site for ATP; the sequence is GPNMAGKS.

The protein belongs to the DNA mismatch repair MutS family.

Functionally, this protein is involved in the repair of mismatches in DNA. It is possible that it carries out the mismatch recognition step. This protein has a weak ATPase activity. The protein is DNA mismatch repair protein MutS of Phocaeicola vulgatus (strain ATCC 8482 / DSM 1447 / JCM 5826 / CCUG 4940 / NBRC 14291 / NCTC 11154) (Bacteroides vulgatus).